The primary structure comprises 1367 residues: Histone acetyltransferase HAC2 (1367 aa).

Residues 110–151 form a disordered region; sequence TSSIPGSSGSASETNSGSDITKQDFKNDSPSDSKKVQGSSTS. Over residues 111-127 the composition is skewed to low complexity; it reads SSIPGSSGSASETNSGS. The span at 130–144 shows a compositional bias: basic and acidic residues; that stretch reads TKQDFKNDSPSDSKK. 12 tandem repeats follow at residues 188 to 200, 223 to 235, 251 to 263, 286 to 298, 314 to 326, 349 to 361, 377 to 389, 418 to 430, 432 to 444, 459 to 471, 473 to 485, and 500 to 512. The tract at residues 188 to 512 is 12 X 13 AA approximate repeats; that stretch reads KLGTVVDIVE…IGVDIVEPMK (325 aa). The PHD-type zinc finger occupies 688–765; sequence HQICSPCHSR…EYICPTCLLE (78 aa). A CBP/p300-type HAT domain is found at 780 to 1213; that stretch reads DSGAKDLPET…ILHHLHTSNK (434 aa). Residues 903-905, 922-923, and Trp978 each bind acetyl-CoA; these read LDS and RT. The ZZ-type 1; degenerate zinc finger occupies 1094–1157; that stretch reads ELNYSCTRCS…QLSKVQVNGV (64 aa). Zn(2+) is bound by residues Cys1099, Cys1102, Cys1123, Cys1126, Cys1225, Cys1228, Cys1240, Cys1243, Cys1249, Cys1252, His1261, and His1263. The segment at 1220 to 1273 adopts a ZZ-type 2 zinc-finger fold; it reads SSSLTCTACKKDVSTTIYFPCLLCPDYRACTGCYTKNRTLRHLHIFPTLPSANR. Residues 1274 to 1359 form a TAZ-type zinc finger; the sequence is APSRTVMVLE…NCPVPQCRDR (86 aa).

As to expression, rosette leaves, stems and flowers.

The protein localises to the nucleus. The catalysed reaction is L-lysyl-[protein] + acetyl-CoA = N(6)-acetyl-L-lysyl-[protein] + CoA + H(+). Acetyltransferase enzyme. Acetylates histones, giving a specific tag for transcriptional activation. No acetyltransferase activity found in vitro. The protein is Histone acetyltransferase HAC2 (HAC2) of Arabidopsis thaliana (Mouse-ear cress).